The chain runs to 364 residues: Protein-glutamate methylesterase/protein-glutamine glutaminase (364 aa).

One can recognise a Response regulatory domain in the interval 5–123; it reads RVLVVDDTIL…PAANKAALAN (119 aa). Position 56 is a 4-aspartylphosphate (Asp-56). Residues 174 to 364 enclose the CheB-type methylesterase domain; it reads EIVVIGISTG…QEIVHTVKLY (191 aa). Active-site residues include Ser-181, His-208, and Asp-306.

This sequence belongs to the CheB family. Post-translationally, phosphorylated by CheA. Phosphorylation of the N-terminal regulatory domain activates the methylesterase activity.

It localises to the cytoplasm. The catalysed reaction is [protein]-L-glutamate 5-O-methyl ester + H2O = L-glutamyl-[protein] + methanol + H(+). It catalyses the reaction L-glutaminyl-[protein] + H2O = L-glutamyl-[protein] + NH4(+). In terms of biological role, involved in chemotaxis. Part of a chemotaxis signal transduction system that modulates chemotaxis in response to various stimuli. Catalyzes the demethylation of specific methylglutamate residues introduced into the chemoreceptors (methyl-accepting chemotaxis proteins or MCP) by CheR. Also mediates the irreversible deamidation of specific glutamine residues to glutamic acid. This Desulfotalea psychrophila (strain LSv54 / DSM 12343) protein is Protein-glutamate methylesterase/protein-glutamine glutaminase.